The primary structure comprises 473 residues: MSFTVAIVGRPNVGKSTLFNRLVGKKLALVDDTPGVTRDRRPGDARLMGLTFTIIDTAGLEEADEESLQGRMRAQTEAAIDEADLSLFVVDAKNGLTPVDTALAEMLRRRGKPVVLVANKSEARGSDSGFYDAYTLGLGEPTPISAEHGQGMIDLRDAIVAAIGKDRAYAKEDVAVTDVDIPPSESEADGEDEEPVYDDTKPLRVAIVGRPNAGKSTLINRFLGEDRLLTGPEAGITRDSISVEWDWRGRTIKMFDTAGMRRKARVTEKLEKLSVADALRAIRFAETVVIVFDATIPFEKQDLQIVDLVLREGRAAVLAFNKWDMIEDRQAVLADLREKTDRLLPQARGIRAVPISGQTGWGLDKLMQSIIDTDRVWNKRISTARLNRWLETQQIQHPPPAVSGRRIKLKYMTQVKARPPAFMISCTRSDALPESYTRYLINGLRADFDMPSVPIRIHFRSAENPYESKKKRT.

2 EngA-type G domains span residues 3–167 (FTVA…GKDR) and 203–378 (LRVA…RVWN). GTP contacts are provided by residues 9–16 (GRPNVGKS), 56–60 (DTAGL), 119–122 (NKSE), 209–216 (GRPNAGKS), 256–260 (DTAGM), and 321–324 (NKWD). The KH-like domain occupies 379-463 (KRISTARLNR…PIRIHFRSAE (85 aa)).

It belongs to the TRAFAC class TrmE-Era-EngA-EngB-Septin-like GTPase superfamily. EngA (Der) GTPase family. In terms of assembly, associates with the 50S ribosomal subunit.

Functionally, GTPase that plays an essential role in the late steps of ribosome biogenesis. The sequence is that of GTPase Der from Rhizobium etli (strain CIAT 652).